We begin with the raw amino-acid sequence, 262 residues long: tRNA (guanine-N(1)-)-methyltransferase (262 aa).

S-adenosyl-L-methionine contacts are provided by residues Gly-111 and 130 to 135 (LGDFVL).

It belongs to the RNA methyltransferase TrmD family. Homodimer.

Its subcellular location is the cytoplasm. It catalyses the reaction guanosine(37) in tRNA + S-adenosyl-L-methionine = N(1)-methylguanosine(37) in tRNA + S-adenosyl-L-homocysteine + H(+). Specifically methylates guanosine-37 in various tRNAs. This is tRNA (guanine-N(1)-)-methyltransferase from Desulfitobacterium hafniense (strain Y51).